A 150-amino-acid chain; its full sequence is 3-hydroxyacyl-[acyl-carrier-protein] dehydratase FabZ (150 aa).

Histidine 51 is a catalytic residue.

The protein belongs to the thioester dehydratase family. FabZ subfamily.

Its subcellular location is the cytoplasm. It carries out the reaction a (3R)-hydroxyacyl-[ACP] = a (2E)-enoyl-[ACP] + H2O. Functionally, involved in unsaturated fatty acids biosynthesis. Catalyzes the dehydration of short chain beta-hydroxyacyl-ACPs and long chain saturated and unsaturated beta-hydroxyacyl-ACPs. The polypeptide is 3-hydroxyacyl-[acyl-carrier-protein] dehydratase FabZ (Legionella pneumophila (strain Paris)).